The primary structure comprises 208 residues: uncharacterized protein (208 aa).

The next 6 helical transmembrane spans lie at 5 to 25 (VIGI…KEAW), 41 to 61 (MLLI…IAAL), 69 to 89 (ANGI…LFFL), 123 to 143 (VLLG…ICGL), 150 to 170 (VFFF…TIAG), and 176 to 196 (NKLL…LVIY).

It is found in the cell membrane. This is an uncharacterized protein from Bacillus subtilis (strain 168).